The primary structure comprises 756 residues: Serine/threonine-protein kinase DCLK2 (756 aa).

The segment at 1–44 (MASTRSIELEHFEERDKRPRPGSRRGAPSSSGGSSISGPKGNGL) is disordered. Over residues 7-19 (IELEHFEERDKRP) the composition is skewed to basic and acidic residues. The span at 24 to 43 (RRGAPSSSGGSSISGPKGNG) shows a compositional bias: low complexity. Residue T61 is modified to Phosphothreonine. Doublecortin domains follow at residues 72–158 (KKAR…VDYT) and 196–279 (KLVT…AQDD). Composition is skewed to low complexity over residues 301-311 (KYSGSRSPGFS) and 323-346 (TPSSQLSTPKSTKSSSSSPTSPGS). The interval 301-375 (KYSGSRSPGF…GPELDRCLSP (75 aa)) is disordered. A compositionally biased stretch (polar residues) spans 353-364 (ISAQGRSSSNVN). Phosphoserine is present on S361. The Protein kinase domain occupies 393 to 650 (YRIGKVIGDG…AGEILSHPWV (258 aa)). Residues 399-407 (IGDGNFAVV) and K422 contribute to the ATP site. D514 (proton acceptor) is an active-site residue. S646 is modified (phosphoserine). Phosphothreonine is present on T665. Positions 707-756 (QDSSRPSREQTSPVPPSAQEAPPPLESPRPPGPPATSGCDLAGTWRRHRD) are disordered. The segment covering 719–740 (PVPPSAQEAPPPLESPRPPGPP) has biased composition (pro residues).

Belongs to the protein kinase superfamily. CAMK Ser/Thr protein kinase family. CaMK subfamily. Binds to and stabilizes microtubules. Interacts with MAPK8IP1/JIP-1, MAPK8IP2/JIP-2, MAPK9/JNK2, PPP1R9B/NEURABIN-2 and actin. Post-translationally, autophosphorylated. In terms of tissue distribution, expressed in the central and peripheral nervous system including the brain, spinal cord, cranial and dorsal root ganglia and in the parasympathetic ganglia. Present in neurons, but not in glial cells, in most forebrain areas. Strong expression in the hippocampal CA1 pyramidal cell layer. Expressed in the photoreceptor sensory cilium complex and in eyes. Also detected in individual cells of the olfactory epithelium.

The protein localises to the cytoplasm. Its subcellular location is the cytoskeleton. The catalysed reaction is L-seryl-[protein] + ATP = O-phospho-L-seryl-[protein] + ADP + H(+). It carries out the reaction L-threonyl-[protein] + ATP = O-phospho-L-threonyl-[protein] + ADP + H(+). Functionally, protein kinase with a significantly reduced Ca(2+)+/CAM affinity and dependence compared to other members of the CaMK family. May play a role in the down-regulation of CRE-dependent gene activation probably by phosphorylation of the CREB coactivator CRTC2/TORC2 and the resulting retention of TORC2 in the cytoplasm. This chain is Serine/threonine-protein kinase DCLK2 (Dclk2), found in Mus musculus (Mouse).